Here is a 432-residue protein sequence, read N- to C-terminus: Keratin, type I cytoskeletal 17 (432 aa).

Residues methionine 1 to serine 24 are disordered. Positions methionine 1–glycine 83 are head. A phosphoserine mark is found at serine 12 and serine 13. Lysine 15 participates in a covalent cross-link: Glycyl lysine isopeptide (Lys-Gly) (interchain with G-Cter in SUMO1); alternate. A Glycyl lysine isopeptide (Lys-Gly) (interchain with G-Cter in SUMO2); alternate cross-link involves residue lysine 15. Serine 25, serine 32, and serine 39 each carry phosphoserine. The residue at position 44 (serine 44) is a Phosphoserine; by RPS6KA1. The segment at glutamate 84 to tyrosine 120 is coil 1A. The 312-residue stretch at glutamate 84–leucine 395 folds into the IF rod domain. The segment at valine 102–isoleucine 116 is peptide epitope S1; induces T-cell and keratinocyte proliferation and IFN-gamma production. Threonine 110 carries the post-translational modification Phosphothreonine. A linker 1 region spans residues glutamine 121–isoleucine 138. Residues glutamate 139–arginine 230 form a coil 1B region. A peptide epitope S2; induces T-cell proliferation and IFN-gamma production region spans residues alanine 153–aspartate 167. The interval glycine 231–serine 250 is linker 12. The coil 2 stretch occupies residues arginine 251–aspartate 392. Lysine 278 is covalently cross-linked (Glycyl lysine isopeptide (Lys-Gly) (interchain with G-Cter in SUMO2)). A Phosphothreonine modification is found at threonine 279. A Phosphoserine modification is found at serine 323. The segment at glutamate 332–isoleucine 346 is peptide epitope S4; induces T-cell and keratinocyte proliferation and IFN-gamma production. Residues alanine 393–arginine 432 are tail. Residues lysine 399, lysine 400, and lysine 419 each participate in a glycyl lysine isopeptide (Lys-Gly) (interchain with G-Cter in SUMO1); alternate cross-link. Residues lysine 399, lysine 400, and lysine 419 each participate in a glycyl lysine isopeptide (Lys-Gly) (interchain with G-Cter in SUMO2); alternate cross-link.

It belongs to the intermediate filament family. In terms of assembly, heterodimer of a type I and a type II keratin. KRT17 associates with KRT6 isomers (KRT6A or KRT6B). Interacts with TRADD and SFN. Phosphorylation at Ser-44 occurs in a growth- and stress-dependent fashion in skin keratinocytes, it has no effect on filament organization. Expressed in the outer root sheath and medulla region of hair follicle specifically from eyebrow and beard, digital pulp, nail matrix and nail bed epithelium, mucosal stratified squamous epithelia and in basal cells of oral epithelium, palmoplantar epidermis and sweat and mammary glands. Also expressed in myoepithelium of prostate, basal layer of urinary bladder, cambial cells of sebaceous gland and in exocervix (at protein level).

It localises to the cytoplasm. Functionally, type I keratin involved in the formation and maintenance of various skin appendages, specifically in determining shape and orientation of hair. Required for the correct growth of hair follicles, in particular for the persistence of the anagen (growth) state. Modulates the function of TNF-alpha in the specific context of hair cycling. Regulates protein synthesis and epithelial cell growth through binding to the adapter protein SFN and by stimulating Akt/mTOR pathway. Involved in tissue repair. May be a marker of basal cell differentiation in complex epithelia and therefore indicative of a certain type of epithelial 'stem cells'. Acts as a promoter of epithelial proliferation by acting a regulator of immune response in skin: promotes Th1/Th17-dominated immune environment contributing to the development of basaloid skin tumors. May act as an autoantigen in the immunopathogenesis of psoriasis, with certain peptide regions being a major target for autoreactive T-cells and hence causing their proliferation. The sequence is that of Keratin, type I cytoskeletal 17 (KRT17) from Homo sapiens (Human).